A 220-amino-acid chain; its full sequence is Iron-sulfur cluster repair protein YtfE (220 aa).

It belongs to the RIC family. YtfE subfamily. Homodimer.

It localises to the cytoplasm. Its function is as follows. Di-iron-containing protein involved in the repair of iron-sulfur clusters damaged by oxidative and nitrosative stress conditions. This Salmonella paratyphi A (strain AKU_12601) protein is Iron-sulfur cluster repair protein YtfE.